The chain runs to 1655 residues: Protein scribble homolog (1655 aa).

Residues 1 to 818 (MLKCIPLWRC…MRVWRERMVE (818 aa)) are sufficient for targeting to adherens junction and to inhibit cell proliferation. Residue Ser37 is modified to Phosphoserine. LRR repeat units lie at residues 37-58 (SLEELLLDANQLRELPKPFFRL), 60-81 (NLRKLGLSDNEIQRLPPEVANF), 83-104 (QLVELDVSRNDIPEIPESIKFC), 106-127 (ALEIADFSGNPLSRLPDGFTQL), 129-150 (SLAHLALNDVSLQALPGDVGNL), 152-174 (NLVTLELRENLLKSLPASLSFLV), 175-197 (KLEQLDLGGNDLEVLPDTLGALP), 198-219 (NLRELWLDRNQLSALPPELGNL), 221-243 (RLVCLDVSENRLEELPAELGGLV), 244-265 (LLTDLLLSQNLLRRLPDGIGQL), 267-288 (QLSILKVDQNRLCEVTEAIGDC), 290-312 (NLSELILTENLLMALPRSLGKLT), 313-334 (KLTNLNVDRNHLEALPPEIGGC), 336-357 (ALSVLSLRDNRLAVLPPELAHT), 359-381 (ELHVLDVAGNRLQSLPFALTHLN), and 382-402 (LKALWLAENQAQPMLRFQTED). Residue Thr378 is modified to Phosphothreonine. 3 disordered regions span residues 417–440 (PQQPPPSLEDAGQQGSLSETWSDA), 459–606 (DAEE…IRKD), and 628–702 (LLQG…VSAP). A coiled-coil region spans residues 458–474 (EDAEEAAAEKRGLQRRA). Thr475 is subject to Phosphothreonine. The segment covering 479–494 (SELKVMKRSIEGRRSE) has biased composition (basic and acidic residues). A Phosphoserine modification is found at Ser504. Residues 537 to 555 (EGPSAEAQGGSQQEATTAG) show a composition bias toward low complexity. 2 stretches are compositionally biased toward acidic residues: residues 556–565 (GEEDAEEDYQ) and 660–694 (EEEEEEEGSPQEEEEEEEEENRAEEEEASTEEEDK). Positions 656–701 (RAQKEEEEEEEGSPQEEEEEEEEENRAEEEEASTEEEDKEGAVVSA) form a coiled coil. A Phosphoserine modification is found at Ser688. A Phosphothreonine modification is found at Thr689. 2 positions are modified to phosphoserine: Ser708 and Ser764. The interval 717 to 1229 (IEPARIEEEE…SLESISSIDR (513 aa)) is interaction with ARHGEF7. The PDZ 1 domain occupies 728-815 (TLTILRQTGG…AVQMRVWRER (88 aa)). The interval 728–1194 (TLTILRQTGG…TVLVCDGFEA (467 aa)) is required for interaction with VIM. The residue at position 826 (Thr826) is a Phosphothreonine. Residues 827–853 (PLRPEDDYSPRERRGGGLRLPLLPPES) are disordered. Over residues 829-841 (RPEDDYSPRERRG) the composition is skewed to basic and acidic residues. Residues Ser835, Ser853, Ser875, and Ser939 each carry the phosphoserine modification. PDZ domains follow at residues 862–950 (VACL…EREA), 1004–1093 (EIRL…RRDP), and 1100–1194 (ELCI…GFEA). The tract at residues 1105-1117 (KAPGERLGISIRG) is interaction with tick-borne encephalitis virus RNA-directed RNA polymerase NS5. Ser1140, Ser1220, Ser1223, Ser1226, Ser1232, Ser1276, Ser1279, Ser1295, Ser1298, Ser1306, and Ser1309 each carry phosphoserine. The span at 1227 to 1242 (IDRELSPEGPGKEKEL) shows a compositional bias: basic and acidic residues. A disordered region spans residues 1227-1246 (IDRELSPEGPGKEKELPGQT). The tract at residues 1277–1489 (AGSVQRVPSG…APERALSPAE (213 aa)) is disordered. Positions 1302 to 1311 (QQPPSPPSPD) are enriched in pro residues. At Thr1342 the chain carries Phosphothreonine. Ser1348 is modified (phosphoserine). A compositionally biased stretch (basic and acidic residues) spans 1353-1365 (SFRERQKYFELEV). Position 1378 is a phosphoserine (Ser1378). The stretch at 1379 to 1419 (LVGADDLRKMQEEEARKLQQKRAQMLREAAEAGAEARLALD) forms a coiled coil. Residues 1383–1395 (DDLRKMQEEEARK) show a composition bias toward basic and acidic residues. Low complexity predominate over residues 1409–1421 (EAGAEARLALDGE). A compositionally biased stretch (acidic residues) spans 1422–1432 (TLGEEEQEDEQ). Phosphoserine is present on residues Ser1437, Ser1445, and Ser1448. Basic and acidic residues predominate over residues 1461-1472 (AKAERRHQERLR). A phosphoserine mark is found at Ser1475, Ser1486, and Ser1508. The disordered stretch occupies residues 1520–1568 (LSRSQEGRGTRGPLERLAEAPSPAPTPSPTPVEDLGPQTSTSPGRLPLS). A compositionally biased stretch (basic and acidic residues) spans 1524–1537 (QEGRGTRGPLERLA). The residue at position 1541 (Ser1541) is a Phosphoserine. Phosphothreonine is present on Thr1545. Residues Ser1547, Ser1561, and Ser1591 each carry the phosphoserine modification. The interval 1622–1655 (GRPSPGAVGPEDVALCSSRRPVRPGRRGLGPVPS) is disordered.

This sequence belongs to the LAP (LRR and PDZ) protein family. As to quaternary structure, interacts with UBE3A. Interacts with PAK1 and PAK2. Interacts (via PDZ domains) with VANGL2. Interacts (via PDZ domains) with LPP and TRIP6; the interaction is direct. Interacts (via PDZ domains) with TJP2. Interacts (via PDZ domains) with APC; may mediate APC targeting to adherens junctions of epithelial cells. Interacts (via PDZ domains) with TSHR; regulates TSHR trafficking and function. Interacts with ARHGEF7 and GIT1; interacts directly with ARHGEF7. Interacts with CTNNB1. Interacts with MAPK12. Interacts (via PDZ domains 1 and 3) with MCC. Interacts with DLG5. Interacts with STK4/MST1 and LATS1 in the presence of DLG5. Interacts (via PDZ domain 3) with CRTAM (via PDZ-binding motif); the interaction promotes CRTAM and SCRIB polarization in a subset of CD4+ T-cells. Interacts with YES1, when YES1 is in a closed conformation; the interaction facilitates YES1 autophosphorylation. Interacts (via PDZ domains) with VIM; the interaction protects SCRIB from proteasomal degradation and facilitates SCRIB localization to intermediate filaments, the interaction is reduced by cell contact inhibition. (Microbial infection) Interacts (via fourth PDZ domain) with tick-borne encephalitis virus RNA-directed RNA polymerase NS5; this interaction targets viral NS5 to the cell membrane periphery and nucleus and prevents STAT1 phosphorylation, and thus, the activation of the JAK-STAT signaling pathway. Interacts with HPV E6. Interacts with influenza A virus protein NS1; the interaction results in the translocation of SCRIB from the cell membrane to perinuclear puncta. Post-translationally, ubiquitinated; targeted for UBE3A-dependent multiubiquitination in the presence of high-risk HPV E6 proteins and degraded. In terms of processing, palmitoylated. Could be depalmitoylated by LYPLA1 and/or LYPLA2. Palmitoylation of SCRIB by ZDHHC7 is required for its localization to cell-cell junctions, function in the establishement of epithelial cell polarity and the regulation of downstream signaling pathways important for epithelial cell differentiation. Expressed in kidney, skeletal muscles, liver, lung, breast, intestine, placenta and skin mainly in epithelial cells (at protein level).

It is found in the cell membrane. The protein localises to the cell junction. It localises to the adherens junction. The protein resides in the cell projection. Its subcellular location is the lamellipodium. It is found in the cytoplasm. The protein localises to the postsynapse. It localises to the presynapse. Scaffold protein involved in different aspects of polarized cell differentiation regulating epithelial and neuronal morphogenesis and T-cell polarization. Via its interaction with CRTAM, required for the late phase polarization of a subset of CD4+ T-cells, which in turn regulates TCR-mediated proliferation and IFNG and IL22 production. Plays a role in cell directional movement, cell orientation, cell sheet organization and Golgi complex polarization at the cell migration front. Promotes epithelial cell layer barrier function via maintaining cell-cell adhesion. Most probably functions in the establishment of apico-basal cell polarity. May function in cell proliferation regulating progression from G1 to S phase and as a positive regulator of apoptosis for instance during acinar morphogenesis of the mammary epithelium. May regulate cell invasion via MAPK-mediated cell migration and adhesion. May play a role in exocytosis and in the targeting of synaptic vesicles to synapses. Functions as an activator of Rac GTPase activity. The polypeptide is Protein scribble homolog (Homo sapiens (Human)).